The primary structure comprises 238 residues: MPPVKAPGNVSDCYFVGRVSLLKWISELLNEPVKKVEDLASGHHYCMALNLVYPGQVNMHRVRMNAINEWERSENFKIIQDVLSRNNIDKGIDVNKLVTGKYMDNFEFFQWFKWFFDQNYKGSKSGATESGSANAVTKTSKPGNRSGSTAASMQNPKASSTSGPSIDSKELEDLRRQIAKGQLESQFYFDKLHEIEIYMDQMNELMTQVEIAEPEDSPFYIKSVVKKIEDILYAEYHQ.

Positions 15-117 (FVGRVSLLKW…FFQWFKWFFD (103 aa)) constitute a Calponin-homology (CH) domain. Positions 101–238 (KYMDNFEFFQ…EDILYAEYHQ (138 aa)) are interaction with aurora kinase. Residues 124 to 165 (KSGATESGSANAVTKTSKPGNRSGSTAASMQNPKASSTSGPS) show a composition bias toward polar residues. The tract at residues 124-169 (KSGATESGSANAVTKTSKPGNRSGSTAASMQNPKASSTSGPSIDSK) is disordered. Residue Ser-148 is modified to Phosphoserine. The 83-residue stretch at 156-238 (PKASSTSGPS…EDILYAEYHQ (83 aa)) folds into the EB1 C-terminal domain.

Belongs to the MAPRE family. In terms of assembly, homodimer; disulfide-linked and via interaction of the C-terminal EB1-specific domains. Interacts with BOP1 (via C-terminal WD repeats). Interacts with giardin subunit gamma, neurogenic locus notch homolog protein, GL50803_8358 and GL50803_11327. Interacts (via C-terminal residues 101-238) with aurora kinase. Interacts with tubulin gamma chain. In terms of processing, phosphorylated in vitro by aurora kinase. Phosphorylation is important for cell division.

It localises to the nucleus membrane. The protein localises to the cytoplasm. Its subcellular location is the cytoskeleton. The protein resides in the spindle. It is found in the nucleus envelope. It localises to the flagellum axoneme. The protein localises to the cell projection. Its subcellular location is the cilium. The protein resides in the flagellum. Functionally, involved in cell division. Involved in mitosis. Regulates dynamics of microtubules (MTs) during mitosis. Required for cytokinesis. Binds polymerized MTs in vitro. Is able to rescue a mitotic division defect, the proper positioning of the nucleus, of the S.cerevisiae BIM1 knockout mutant in a complementation assay. May play a role in spindle positioning and MT distribution. May be involved in MT nucleation for the formation of median bodies and in the biogenesis of flagella. Based on its localization to both the flagellar exit point and the distal flagellar tips, it may mediate the transition from anterograde to retrograde intraflagellar transport (IFT). The protein is End-binding protein 1 of Giardia intestinalis (strain ATCC 50803 / WB clone C6) (Giardia lamblia).